Reading from the N-terminus, the 396-residue chain is Mannonate dehydratase (396 aa).

The protein belongs to the mannonate dehydratase family. Fe(2+) is required as a cofactor. Mn(2+) serves as cofactor.

It carries out the reaction D-mannonate = 2-dehydro-3-deoxy-D-gluconate + H2O. It participates in carbohydrate metabolism; pentose and glucuronate interconversion. Catalyzes the dehydration of D-mannonate. The protein is Mannonate dehydratase of Enterobacter sp. (strain 638).